Here is a 345-residue protein sequence, read N- to C-terminus: METFVRLFKDSPQQRSDAWHAIRRTQVGGSDLASVLGLNPYKSYYIILAEKANLFKKNLNRAACSWGTLFERVSKDLLELFCQTTVIGDNIHIDGTYLGYPGHSNSPDGFCHLTLGYTQQSWEIKTIFNNVRYEATKRIPVLVEIKSPFNRKIKNSVPSYYMPQIQSGLALSPPISMGIYVEAMFRVCGIHQLGSNNETNTDIHPPESMLPLAWGIITICSTQEHTEAPQDFGTLDAETFRQLLETLYQKDQYTIHYSMPYETACPEMPNVVGYFGWKVFIFQIIPVMKHPQFLKDKYPIIQQFLRDLHTIKASPSPMETYEKICCSEESALSTEDIDNFTDMLT.

This sequence belongs to the asfivirus D345L family. Interacts with IKKA/CHUK and IKBKB.

Its subcellular location is the host cytoplasm. Functionally, plays a role in the negative regulation of host NF-kappa-B signaling pathway. Mechanistically, recruits host IKKA/CHUK and IKBKB to suppress their kinase activity towards NFKBIA. This is Protein D345L from African swine fever virus (strain Badajoz 1971 Vero-adapted) (Ba71V).